Consider the following 275-residue polypeptide: MNAEAIQTPMTVDVKADDKPYFDAPSKMSAKNVSVFYGDKRAIDDVSIEIPQRYVTAFIGPSGCGKSTFLRSLNRMNDTIANARVEGEILLDGEDIYKSGMDVVQLRARVGMVFQKPNPFPKSIYENIAYGPKIHGITGSKAELDEIVEQSLRRAGLWDEVKDRLGDSGTALSGGQQQRLCIARAIAVDPEVILMDEPCSALDPIATARIEELIDELRGRYAIVIVTHSMQQAARVSQRTAFFHLGKIVEYGKTSDIFTNPREERTKDYITGRYG.

One can recognise an ABC transporter domain in the interval 28–270 (MSAKNVSVFY…PREERTKDYI (243 aa)). 60 to 67 (GPSGCGKS) lines the ATP pocket.

The protein belongs to the ABC transporter superfamily. Phosphate importer (TC 3.A.1.7) family. The complex is composed of two ATP-binding proteins (PstB), two transmembrane proteins (PstC and PstA) and a solute-binding protein (PstS).

The protein localises to the cell inner membrane. It catalyses the reaction phosphate(out) + ATP + H2O = ADP + 2 phosphate(in) + H(+). In terms of biological role, part of the ABC transporter complex PstSACB involved in phosphate import. Responsible for energy coupling to the transport system. This is Phosphate import ATP-binding protein PstB from Novosphingobium aromaticivorans (strain ATCC 700278 / DSM 12444 / CCUG 56034 / CIP 105152 / NBRC 16084 / F199).